The primary structure comprises 304 residues: uncharacterized protein (304 aa).

Helical transmembrane passes span 9–29 (VFYVLLMGLGFPIMRFMSIHF), 67–87 (IILYLFIYLFILGIFMTGNMF), 100–120 (AGSIFGILAMPLAIIIAGIFF), 131–151 (EFYIGELLAIIGSLIFVINSS), 159–179 (FFLGAIFLFTAIFIQSVQNLI), 189–209 (AVVISASTATISGVLFLCLAF), 222–242 (IGMLIGLVCAGFYGMLTGMLM), 252–272 (ITVFNILQLLIPLSTAIIGYL), and 278–298 (INIYQGISGIIVIIGCVLALK). EamA domains follow at residues 13–148 (LLMG…IFVI) and 171–298 (FIQS…LALK).

Belongs to the EamA transporter family.

It localises to the cell membrane. This is an uncharacterized protein from Haemophilus influenzae (strain ATCC 51907 / DSM 11121 / KW20 / Rd).